A 171-amino-acid chain; its full sequence is MNSIPEGRPTPNLPRTANKRGVARLAAVQALFQMDVAGTGVMEVVAEYEAFRLGKEVDGTQYLDADPQWFRAIVAGVVEDQLKLDPMIHQALTEDWPLSRLDSTLRAILRAGAWELKARKDVPTAVIVSEYVDIAKAFYTEDEPKLVNAVLDRLALVIRGESRGAKPRHKS.

The protein belongs to the NusB family.

Its function is as follows. Involved in transcription antitermination. Required for transcription of ribosomal RNA (rRNA) genes. Binds specifically to the boxA antiterminator sequence of the ribosomal RNA (rrn) operons. This Brucella abortus (strain S19) protein is Transcription antitermination protein NusB.